A 76-amino-acid chain; its full sequence is Acyl carrier protein (76 aa).

The 76-residue stretch at 1–76 (MATFDDVKDV…AAIDYIESKQ (76 aa)) folds into the Carrier domain. Position 36 is an O-(pantetheine 4'-phosphoryl)serine (S36).

It belongs to the acyl carrier protein (ACP) family. In terms of processing, 4'-phosphopantetheine is transferred from CoA to a specific serine of apo-ACP by AcpS. This modification is essential for activity because fatty acids are bound in thioester linkage to the sulfhydryl of the prosthetic group.

It is found in the cytoplasm. It functions in the pathway lipid metabolism; fatty acid biosynthesis. Functionally, carrier of the growing fatty acid chain in fatty acid biosynthesis. The chain is Acyl carrier protein from Deinococcus deserti (strain DSM 17065 / CIP 109153 / LMG 22923 / VCD115).